The chain runs to 466 residues: MAKTLYEKVWDAHIVVAAEGEAPIIYVDRHLVHEVTSPQAFSGLEVAGRKMRAPEKTFATMDHNTSTTSASLDALSPMARTQVQTLERNCKEFGVRLYDIHHKNQGIVHVMGPELGITLPGTVIVCGDSHTATHGAFGALAFGIGTSEVEHVMATQTLRQLKAKTMKIEVRGHVAEGITAKDIVLAIIGKIGMDGGTGYVVEFCGEAIEALTMEGRMTVCNMAIEMGAKAGMIAPDATTAEYLKGREFAPKGDNWQQAIAAWAELKSDADATFDATVVLQASDIAPQLTWGTNPGQVVAIDQFVPNPAEETNSTVRSSIEKALEYVDLSAGTLMTNVGINKVFIGSCTNSRIEDLRAAAVHAKGRQVAEGVKAIVVPGSGLVKEQAEAEGLDKIFLEAGFEWRLPGCSMCLAMNDDKLEAGDRCASTSNRNFEGRQGRGSRTHLVSPAMAAAAAVAGHFVDIRKPY.

Residues C347, C407, and C410 each coordinate [4Fe-4S] cluster.

This sequence belongs to the aconitase/IPM isomerase family. LeuC type 1 subfamily. In terms of assembly, heterodimer of LeuC and LeuD. Requires [4Fe-4S] cluster as cofactor.

The enzyme catalyses (2R,3S)-3-isopropylmalate = (2S)-2-isopropylmalate. It functions in the pathway amino-acid biosynthesis; L-leucine biosynthesis; L-leucine from 3-methyl-2-oxobutanoate: step 2/4. Its function is as follows. Catalyzes the isomerization between 2-isopropylmalate and 3-isopropylmalate, via the formation of 2-isopropylmaleate. In Shewanella piezotolerans (strain WP3 / JCM 13877), this protein is 3-isopropylmalate dehydratase large subunit.